Here is a 151-residue protein sequence, read N- to C-terminus: Ribosomal RNA large subunit methyltransferase H (151 aa).

Residues G100 and 119 to 124 (LSKMTF) contribute to the S-adenosyl-L-methionine site.

It belongs to the RNA methyltransferase RlmH family. As to quaternary structure, homodimer.

The protein resides in the cytoplasm. The enzyme catalyses pseudouridine(1915) in 23S rRNA + S-adenosyl-L-methionine = N(3)-methylpseudouridine(1915) in 23S rRNA + S-adenosyl-L-homocysteine + H(+). Functionally, specifically methylates the pseudouridine at position 1915 (m3Psi1915) in 23S rRNA. This Thermotoga sp. (strain RQ2) protein is Ribosomal RNA large subunit methyltransferase H.